Consider the following 288-residue polypeptide: Elongation factor Ts (288 aa).

Residues 82–85 (TDFV) are involved in Mg(2+) ion dislocation from EF-Tu.

Belongs to the EF-Ts family.

The protein localises to the cytoplasm. In terms of biological role, associates with the EF-Tu.GDP complex and induces the exchange of GDP to GTP. It remains bound to the aminoacyl-tRNA.EF-Tu.GTP complex up to the GTP hydrolysis stage on the ribosome. This Prosthecochloris aestuarii (strain DSM 271 / SK 413) protein is Elongation factor Ts.